Reading from the N-terminus, the 240-residue chain is Cysteine-rich venom protein triflin (240 aa).

The signal sequence occupies residues 1–19 (MIAFIVLPILAAVLQQSSG). Positions 39–166 (DLHNSLRRSV…KYSYFYVCQY (128 aa)) constitute an SCP domain. 8 disulfide bridges follow: Cys75–Cys153, Cys92–Cys167, Cys148–Cys164, Cys186–Cys193, Cys189–Cys198, Cys202–Cys235, Cys211–Cys229, and Cys220–Cys233. The ShKT domain maps to 202–235 (CTRENEFTNCDSLVQKSSCQDNYMKSKCPASCFC).

The protein belongs to the CRISP family. In terms of assembly, forms a stable, non-covalent complex with SSP-2. In terms of tissue distribution, expressed by the venom gland.

Its subcellular location is the secreted. Functionally, blocks contraction of smooth muscle elicited by high potassium-induced depolarization. May target voltage-gated calcium channels (Cav) on smooth muscle. The protein is Cysteine-rich venom protein triflin of Protobothrops flavoviridis (Habu).